A 125-amino-acid polypeptide reads, in one-letter code: Small ribosomal subunit protein uS12m (125 aa).

Residues 1–24 (MPTSNQSIRHGREKKRRTDRTRAL) form a disordered region. Residues 9 to 19 (RHGREKKRRTD) are compositionally biased toward basic residues.

The protein belongs to the universal ribosomal protein uS12 family.

Its subcellular location is the mitochondrion. Its function is as follows. Protein S12 is involved in the translation initiation step. The sequence is that of Small ribosomal subunit protein uS12m (RPS12) from Pinus sylvestris (Scotch pine).